The primary structure comprises 320 residues: Glucokinase (320 aa).

It belongs to the ROK (NagC/XylR) family. Monomer. A divalent metal cation is required as a cofactor.

The enzyme catalyses D-glucose + ATP = D-glucose 6-phosphate + ADP + H(+). Catalyzes the phosphorylation of D-glucose to D-glucose 6-phosphate using ATP as the phosphate donor. ITP can also serve as an effective phosphoryl donor. According to Hansen et al., the enzyme has a broad hexose specificity, and in addition to glucose, which shows the highest catalytic efficiency, it can also phosphorylate fructose, mannose, glucosamine, N-acetylglucosamine, N-acetylmannosamine and 2-deoxyglucose. However, according to Sakuraba et al., the enzyme shows strict specificity for D-glucose. This is Glucokinase from Aeropyrum pernix (strain ATCC 700893 / DSM 11879 / JCM 9820 / NBRC 100138 / K1).